The primary structure comprises 166 residues: Thioredoxin, mitochondrial (166 aa).

A mitochondrion-targeting transit peptide spans 1-59 (MAQRLLLGRFLTSVISRKPPQGVWASLTSKTLQTPQYNAGGLTVMPSPARTVHTTRVCL). The Thioredoxin domain maps to 61–166 (TFNVQDGPDF…LEAFLKKLIG (106 aa)). Residues C90 and C93 each act as nucleophile in the active site. C90 and C93 are joined by a disulfide. K152 is subject to N6-acetyllysine; alternate. K152 is modified (N6-succinyllysine; alternate).

The protein belongs to the thioredoxin family. Monomer.

It is found in the mitochondrion. Important for the control of mitochondrial reactive oxygen species homeostasis, apoptosis regulation and cell viability. Is involved in various redox reactions including the reduction of protein disulfide bonds, through the reversible oxidation of its active center dithiol to a disulfide. This chain is Thioredoxin, mitochondrial (Txn2), found in Mus musculus (Mouse).